Here is a 423-residue protein sequence, read N- to C-terminus: Imidazolonepropionase (423 aa).

His78 and His80 together coordinate Fe(3+). The Zn(2+) site is built by His78 and His80. Arg87, Tyr150, and His183 together coordinate 4-imidazolone-5-propanoate. Tyr150 lines the N-formimidoyl-L-glutamate pocket. Residue His247 coordinates Fe(3+). His247 contributes to the Zn(2+) binding site. Residue Glu250 coordinates 4-imidazolone-5-propanoate. Residue Asp322 coordinates Fe(3+). Asp322 contributes to the Zn(2+) binding site. The N-formimidoyl-L-glutamate site is built by Asn324 and Gly326. Ser327 is a 4-imidazolone-5-propanoate binding site.

This sequence belongs to the metallo-dependent hydrolases superfamily. HutI family. The cofactor is Zn(2+). Requires Fe(3+) as cofactor.

The protein resides in the cytoplasm. It carries out the reaction 4-imidazolone-5-propanoate + H2O = N-formimidoyl-L-glutamate. Its pathway is amino-acid degradation; L-histidine degradation into L-glutamate; N-formimidoyl-L-glutamate from L-histidine: step 3/3. In terms of biological role, catalyzes the hydrolytic cleavage of the carbon-nitrogen bond in imidazolone-5-propanoate to yield N-formimidoyl-L-glutamate. It is the third step in the universal histidine degradation pathway. The sequence is that of Imidazolonepropionase from Bacillus cereus (strain G9842).